The chain runs to 340 residues: Transcription initiation factor IIB (340 aa).

The TFIIB-type zinc finger occupies 16-49; that stretch reads VKMICSECREDPPNLVEEFSSGDTVCGSCGLVLG. Positions 20, 23, 41, and 44 each coordinate Zn(2+). 2 tandem repeats follow at residues 128–204 and 239–315.

The protein belongs to the TFIIB family. As to quaternary structure, associates with TFIID-IIA (DA complex) to form TFIID-IIA-IIB (DAB-complex) which is then recognized by polymerase II.

Its subcellular location is the nucleus. Its function is as follows. General factor that plays a major role in the activation of eukaryotic genes transcribed by RNA polymerase II. In Schizosaccharomyces pombe (strain 972 / ATCC 24843) (Fission yeast), this protein is Transcription initiation factor IIB (sua7).